Consider the following 185-residue polypeptide: Serine/arginine-rich splicing factor RSZ21 (185 aa).

Residues 2–73 form the RRM domain; the sequence is ARLYVGNLDP…WRVELSRNSS (72 aa). The CCHC-type zinc-finger motif lies at 86-103; the sequence is MKCYECGETGHFARECRL. Residues 104 to 185 form a disordered region; that stretch reads RIGPGGLGSG…DGGRYRRSRS (82 aa). Basic residues predominate over residues 113–123; that stretch reads GKRRSRSRSRS. Composition is skewed to low complexity over residues 124–138 and 151–162; these read RSPQYRKSPTYGRRS and VSPVRGRSYSRS.

Belongs to the splicing factor SR family. Post-translationally, extensively phosphorylated on serine residues in the RS domain. In terms of tissue distribution, expressed in roots, leaves and immature seeds.

Its subcellular location is the nucleus. Its function is as follows. Involved in pre-mRNA splicing. The sequence is that of Serine/arginine-rich splicing factor RSZ21 (RSZP21) from Oryza sativa subsp. japonica (Rice).